Reading from the N-terminus, the 874-residue chain is Alanine--tRNA ligase (874 aa).

4 residues coordinate Zn(2+): H563, H567, C665, and H669.

It belongs to the class-II aminoacyl-tRNA synthetase family. The cofactor is Zn(2+).

The protein localises to the cytoplasm. It carries out the reaction tRNA(Ala) + L-alanine + ATP = L-alanyl-tRNA(Ala) + AMP + diphosphate. In terms of biological role, catalyzes the attachment of alanine to tRNA(Ala) in a two-step reaction: alanine is first activated by ATP to form Ala-AMP and then transferred to the acceptor end of tRNA(Ala). Also edits incorrectly charged Ser-tRNA(Ala) and Gly-tRNA(Ala) via its editing domain. This Histophilus somni (strain 2336) (Haemophilus somnus) protein is Alanine--tRNA ligase.